Reading from the N-terminus, the 108-residue chain is Ferredoxin, plant-type (108 aa).

The 92-residue stretch at 5–96 (FEITVQPGGE…DLCIERYSKP (92 aa)) folds into the 2Fe-2S ferredoxin-type domain. Positions 40, 45, 48, and 80 each coordinate [2Fe-2S] cluster.

The protein belongs to the 2Fe2S plant-type ferredoxin family.

Its pathway is aromatic compound metabolism; catechol degradation. Ferredoxins are iron-sulfur proteins that transfer electrons in a wide variety of metabolic reactions. This Pseudomonas putida (Arthrobacter siderocapsulatus) protein is Ferredoxin, plant-type (nahT).